The following is a 219-amino-acid chain: GTP cyclohydrolase 1 (219 aa).

Residues 1–37 (MDAVLKSLSVRLPDAADKRSDTGRPERVTERPTRQEA) are disordered. Residues 14 to 37 (DAADKRSDTGRPERVTERPTRQEA) show a composition bias toward basic and acidic residues. Positions 108, 111, and 179 each coordinate Zn(2+).

The protein belongs to the GTP cyclohydrolase I family. Homomer.

The enzyme catalyses GTP + H2O = 7,8-dihydroneopterin 3'-triphosphate + formate + H(+). Its pathway is cofactor biosynthesis; 7,8-dihydroneopterin triphosphate biosynthesis; 7,8-dihydroneopterin triphosphate from GTP: step 1/1. The chain is GTP cyclohydrolase 1 from Methylobacterium sp. (strain 4-46).